Reading from the N-terminus, the 62-residue chain is uncharacterized protein (62 aa).

An N-terminal signal peptide occupies residues 1 to 19 (MKLIILLFVVAAFVTLAMG).

This is an uncharacterized protein from Lepidoptera (butterflies and moths).